The sequence spans 128 residues: L-ectoine synthase (128 aa).

The protein belongs to the ectoine synthase family.

It carries out the reaction (2S)-4-acetamido-2-aminobutanoate = L-ectoine + H2O. Its pathway is amine and polyamine biosynthesis; ectoine biosynthesis; L-ectoine from L-aspartate 4-semialdehyde: step 3/3. Catalyzes the circularization of gamma-N-acetyl-alpha,gamma-diaminobutyric acid (ADABA) to ectoine (1,4,5,6-tetrahydro-2-methyl-4-pyrimidine carboxylic acid), which is an excellent osmoprotectant. The sequence is that of L-ectoine synthase from Aliivibrio fischeri (strain MJ11) (Vibrio fischeri).